Consider the following 265-residue polypeptide: Undecaprenyl-diphosphatase (265 aa).

The next 7 helical transmembrane spans lie at R38–L58, R75–V95, P108–G128, V135–P155, F181–M201, V215–G235, and V244–A264.

This sequence belongs to the UppP family.

It is found in the cell inner membrane. The enzyme catalyses di-trans,octa-cis-undecaprenyl diphosphate + H2O = di-trans,octa-cis-undecaprenyl phosphate + phosphate + H(+). Catalyzes the dephosphorylation of undecaprenyl diphosphate (UPP). Confers resistance to bacitracin. This Xanthomonas axonopodis pv. citri (strain 306) protein is Undecaprenyl-diphosphatase.